A 404-amino-acid polypeptide reads, in one-letter code: SL1278 acyltransferase Chp1 (404 aa).

Topologically, residues 1–42 (MKCPGVSDCVATVRHDNVFAIAAGLRWSAAVPPLHKGDAVTK) are periplasmic. A helical membrane pass occupies residues 43-63 (LLVGAIAGGMLACAAILGDGI). The Cytoplasmic portion of the chain corresponds to 64 to 404 (ASADTALIVP…RGLLPKGKKH (341 aa)). Residues 104-325 (PTATRHVVSY…LRPIIDRAYQ (222 aa)) enclose the PE-PPE domain.

It belongs to the mycobacterial PPE family.

It is found in the cell inner membrane. The catalysed reaction is 3 3'-(hydroxy)phthioceranyl-2'-palmitoyl(stearoyl)-2-O-sulfo-alpha,alpha-trehalose = 3,6,6'-tris-(hydroxy)phthioceranyl-2-palmitoyl(stearoyl)-2'-sulfo-alpha-alpha-trehalose + 2 2'-palmitoyl/stearoyl-2-O-sulfo-alpha,alpha-trehalose.. Activity is potentiated by the SL-1 transporter MmpL8. Inhibited by the lipase inhibitor tetrahydrolipstatin (THL). Functionally, involved in the final steps of the cell wall sulfolipid-1 (SL-1) biosynthesis. Catalyzes two successive acylations of the precursor 2-palmitoyl-3-(C43)-phthioceranyl-alpha, alpha'-D-trehalose-2'-sulfate (SL1278) to yield the tetraacylated sulfolipid SL-1. The protein is SL1278 acyltransferase Chp1 of Mycobacterium tuberculosis (strain ATCC 25618 / H37Rv).